The chain runs to 127 residues: Small ribosomal subunit protein uS13 (127 aa).

Residues 95-118 (GLPVRGQRTHTNARTRKGPKKGLV) show a composition bias toward basic residues. The tract at residues 95-127 (GLPVRGQRTHTNARTRKGPKKGLVRKAAAPAPK) is disordered.

This sequence belongs to the universal ribosomal protein uS13 family. Part of the 30S ribosomal subunit. Forms a loose heterodimer with protein S19. Forms two bridges to the 50S subunit in the 70S ribosome.

In terms of biological role, located at the top of the head of the 30S subunit, it contacts several helices of the 16S rRNA. In the 70S ribosome it contacts the 23S rRNA (bridge B1a) and protein L5 of the 50S subunit (bridge B1b), connecting the 2 subunits; these bridges are implicated in subunit movement. Contacts the tRNAs in the A and P-sites. The sequence is that of Small ribosomal subunit protein uS13 from Anaeromyxobacter sp. (strain Fw109-5).